The sequence spans 734 residues: MALRFPRFSQGLAQDPTTRRIWFGIATAHDFESHDDITEERLYQNIFASHFGQLAIIFLWTSGNLFHVAWQGNFESWVQDPLHVRPIAHAIWDPHFGQPAVEAFTRGGALGPVNIAYSGVYQWWYTIGLRTNEDLYSGALFLLFLSAISLIAGWLHLQPKWKPSVSWFKNAESRLNHHLSGLFGVSPLAWTGHLVHVAIPGSRGEYVRWNNFLDVLPHPQGLGPLFTGQWNLYAQNPDSSSHLFGTSQGAGTAILTLLGGFHPQTQSLWLTDMAHHHLAIAFIFLVAGHMYRTNFGIGHSIKDLLDAHIPPGGRLGRGHKGLYDTINNSLHFQLGLALASLGVITSLVAQHMYSLPAYAFIAQDFTTQAALYTHHQYIAGFIMTGAFAHGAIFFIRDYNPEQNQDNVLARMLDHKEAIISHLSWASLFLGFHTLGLYVHNDVMLAFGTPEKQILIEPIFAQWIQSAHGKTSYGFDVLLSSTSGPAFNAGRSIWLPGWLNAINENTNSLFLTIGPGDFLVHHAIALGLHTTTLILVKGALDARGSKLMPDKKDFGYSFPCDGPGRGGTCDISAWDAFYLAVFWMLNTIGWVTFYWHWKHITLWQGNVSQFNESSTYLMGWLRDYLWLNSSQLINGYNPFGMNSLSVWAWMFLFGHLVWATGFMFLISWRGYWQELIETLAWAHERTPLANLIRWRDKPVALSIVQARLVGLAHFSVGYIFTYAAFLIASTSGKFG.

A run of 8 helical transmembrane segments spans residues 46–69, 135–158, 175–199, 273–291, 330–353, 369–395, 417–439, and 517–535; these read IFASHFGQLAIIFLWTSGNLFHVA, LYSGALFLLFLSAISLIAGWLHLQ, LNHHLSGLFGVSPLAWTGHLVHVAI, MAHHHLAIAFIFLVAGHMY, LHFQLGLALASLGVITSLVAQHMY, AALYTHHQYIAGFIMTGAFAHGAIFFI, AIISHLSWASLFLGFHTLGLYVH, and FLVHHAIALGLHTTTLILV. [4Fe-4S] cluster contacts are provided by C559 and C568. 2 helical membrane passes run 575–596 and 643–665; these read AFYLAVFWMLNTIGWVTFYWHW and LSVWAWMFLFGHLVWATGFMFLI. Chlorophyll a-binding residues include H654, M662, and Y670. W671 is a phylloquinone binding site. The helical transmembrane segment at 707-727 threads the bilayer; sequence LVGLAHFSVGYIFTYAAFLIA.

This sequence belongs to the PsaA/PsaB family. In terms of assembly, the PsaA/B heterodimer binds the P700 chlorophyll special pair and subsequent electron acceptors. PSI consists of a core antenna complex that captures photons, and an electron transfer chain that converts photonic excitation into a charge separation. The eukaryotic PSI reaction center is composed of at least 11 subunits. The cofactor is P700 is a chlorophyll a/chlorophyll a' dimer, A0 is one or more chlorophyll a, A1 is one or both phylloquinones and FX is a shared 4Fe-4S iron-sulfur center..

Its subcellular location is the plastid. The protein localises to the chloroplast thylakoid membrane. It carries out the reaction reduced [plastocyanin] + hnu + oxidized [2Fe-2S]-[ferredoxin] = oxidized [plastocyanin] + reduced [2Fe-2S]-[ferredoxin]. Its function is as follows. PsaA and PsaB bind P700, the primary electron donor of photosystem I (PSI), as well as the electron acceptors A0, A1 and FX. PSI is a plastocyanin-ferredoxin oxidoreductase, converting photonic excitation into a charge separation, which transfers an electron from the donor P700 chlorophyll pair to the spectroscopically characterized acceptors A0, A1, FX, FA and FB in turn. Oxidized P700 is reduced on the lumenal side of the thylakoid membrane by plastocyanin. This is Photosystem I P700 chlorophyll a apoprotein A2 from Antirrhinum majus (Garden snapdragon).